A 430-amino-acid polypeptide reads, in one-letter code: Hydrogenobyrinate a,c-diamide synthase (430 aa).

The region spanning 239-422 (RIGVARDAAF…IHFYLPSDPL (184 aa)) is the GATase cobBQ-type domain. Catalysis depends on Cys-321, which acts as the Nucleophile.

It belongs to the CobB/CbiA family. Requires Mg(2+) as cofactor.

It catalyses the reaction hydrogenobyrinate + 2 L-glutamine + 2 ATP + 2 H2O = hydrogenobyrinate a,c-diamide + 2 L-glutamate + 2 ADP + 2 phosphate + 2 H(+). It functions in the pathway cofactor biosynthesis; adenosylcobalamin biosynthesis; cob(II)yrinate a,c-diamide from precorrin-2 (aerobic route): step 9/10. Catalyzes the ATP-dependent amidation of the two carboxylate groups at positions a and c of hydrogenobyrinate, using either L-glutamine or ammonia as the nitrogen source. This is Hydrogenobyrinate a,c-diamide synthase from Stutzerimonas stutzeri (strain A1501) (Pseudomonas stutzeri).